The chain runs to 551 residues: Formate--tetrahydrofolate ligase (551 aa).

An ATP-binding site is contributed by 61–68 (TPAGEGKS).

This sequence belongs to the formate--tetrahydrofolate ligase family.

It catalyses the reaction (6S)-5,6,7,8-tetrahydrofolate + formate + ATP = (6R)-10-formyltetrahydrofolate + ADP + phosphate. It functions in the pathway one-carbon metabolism; tetrahydrofolate interconversion. The sequence is that of Formate--tetrahydrofolate ligase from Lactiplantibacillus plantarum (strain ATCC BAA-793 / NCIMB 8826 / WCFS1) (Lactobacillus plantarum).